We begin with the raw amino-acid sequence, 350 residues long: S-adenosylmethionine:tRNA ribosyltransferase-isomerase (350 aa).

It belongs to the QueA family. As to quaternary structure, monomer.

The protein localises to the cytoplasm. The enzyme catalyses 7-aminomethyl-7-carbaguanosine(34) in tRNA + S-adenosyl-L-methionine = epoxyqueuosine(34) in tRNA + adenine + L-methionine + 2 H(+). It participates in tRNA modification; tRNA-queuosine biosynthesis. Functionally, transfers and isomerizes the ribose moiety from AdoMet to the 7-aminomethyl group of 7-deazaguanine (preQ1-tRNA) to give epoxyqueuosine (oQ-tRNA). The protein is S-adenosylmethionine:tRNA ribosyltransferase-isomerase of Vibrio vulnificus (strain CMCP6).